Consider the following 134-residue polypeptide: Profilin-3 (134 aa).

Residues Cys13 and Cys118 are joined by a disulfide bond. An Involved in PIP2 interaction motif is present at residues 84-100 (AVIRGKKGSGGITIKKT). Thr114 is subject to Phosphothreonine.

This sequence belongs to the profilin family. As to quaternary structure, occurs in many kinds of cells as a complex with monomeric actin in a 1:1 ratio. In terms of processing, phosphorylated by MAP kinases.

The protein resides in the cytoplasm. It localises to the cytoskeleton. Binds to actin and affects the structure of the cytoskeleton. At high concentrations, profilin prevents the polymerization of actin, whereas it enhances it at low concentrations. The protein is Profilin-3 of Olea europaea (Common olive).